Consider the following 322-residue polypeptide: Glucokinase (322 aa).

ATP is bound at residue glycine 10 to threonine 15.

Belongs to the bacterial glucokinase family.

The protein localises to the cytoplasm. It carries out the reaction D-glucose + ATP = D-glucose 6-phosphate + ADP + H(+). The sequence is that of Glucokinase from Hahella chejuensis (strain KCTC 2396).